Consider the following 190-residue polypeptide: RRP15-like protein (190 aa).

A compositionally biased stretch (basic and acidic residues) spans 1 to 11 (MSTKNRDRLVV). Disordered regions lie at residues 1 to 69 (MSTK…TRKE) and 119 to 190 (QKTM…SDED). Residues 55–66 (QRKKKKVIKKLT) are compositionally biased toward basic residues. Residues 59–84 (KKVIKKLTRKEQSLKHSVKEYRIKLA) are a coiled coil. Residues 119-153 (QKTMSDAVKEKMTARDRKEARERFDGKNFDSDKFA) show a composition bias toward basic and acidic residues. A compositionally biased stretch (acidic residues) spans 167–190 (GEEEDEQMNIGDDEIDAGNYSDED).

It belongs to the RRP15 family.

The protein is RRP15-like protein of Caenorhabditis briggsae.